The chain runs to 309 residues: MEIQFLGTGAGQPAKARNVSSLVLKLLDEINEVWMFDCGEGTQRQILETTIKPRKVKKIFITHMHGDHVFGLPGFLSSRAFQANEEQTDLDIYGPVGIKSFVMTALRTSGSRLPYRIHFHEFDESSLGKIMETDKFTVYAEKLDHTIFCMGYRVVQKDLEGTLDAEALKLAGVPFGPLFGKVKNGENVTLEDGREIIAKDYISEPKKGKVITILGDTRKTDASIRLALGADVLVHESTYGKGDERIAKSHGHSTNMQAADIAKQANAKRLLLNHVSARFMGRDCWQMEEDAKTIFSNTHLVRDLEEVGI.

Zn(2+)-binding residues include histidine 63, histidine 65, aspartate 67, histidine 68, histidine 145, aspartate 216, and histidine 274. The active-site Proton acceptor is aspartate 67.

Belongs to the RNase Z family. In terms of assembly, homodimer. The cofactor is Zn(2+).

It carries out the reaction Endonucleolytic cleavage of RNA, removing extra 3' nucleotides from tRNA precursor, generating 3' termini of tRNAs. A 3'-hydroxy group is left at the tRNA terminus and a 5'-phosphoryl group is left at the trailer molecule.. In terms of biological role, zinc phosphodiesterase, which displays some tRNA 3'-processing endonuclease activity. Probably involved in tRNA maturation, by removing a 3'-trailer from precursor tRNA. This Streptococcus agalactiae serotype V (strain ATCC BAA-611 / 2603 V/R) protein is Ribonuclease Z.